The following is a 1392-amino-acid chain: Leucine-rich PPR motif-containing protein, mitochondrial (1392 aa).

The N-terminal 77 residues, 1–77 (MSALLRPARW…LPEEPAPVRR (77 aa)), are a transit peptide targeting the mitochondrion. PPR repeat units lie at residues 125–159 (LLRS…GTVY), 160–194 (DVSH…NIQP), 195–229 (NRVT…DLPI), 230–264 (TEAV…GIEP), 265–299 (GPDT…DHYF), 300–334 (MDRD…RRSI), 402–436 (HSSS…GFPI), 437–471 (RTHY…GVDP), 677–708 (VGDP…ESDM), 709–745 (VIGG…SAVL), 746–783 (DTAK…IKDA), 784–820 (AVLS…AKPS), 821–856 (SNIS…VLPR), and 953–987 (RDQM…NLIP). Residues K151 and K186 each carry the N6-acetyllysine modification. N6-acetyllysine is present on K291. N6-acetyllysine is present on K462. N6-acetyllysine is present on K749. Phosphoserine occurs at positions 1025, 1026, and 1028. PPR repeat units follow at residues 1030–1064 (GDTV…DVVF), 1065–1101 (SSEA…GFTL), 1102–1136 (NGAA…EQVP), 1137–1173 (SELA…IELS), 1174–1208 (RMVF…ENQT), and 1315–1349 (NDRV…NMKL). Residue S1137 is modified to Phosphoserine.

In terms of assembly, component of mRNP complexes associated with HNRPA1. Component of the complex, at least composed of LRPPRC, BECN1 and BCL2; the interactions prevent BECN1 from forming an autophagy-inducing complex with PIK3C3. Interacts with CECR2, HEBP2, MAP1S, UXT, PPARGC1A and FOXO1. Interacts (via N-terminus) with EIF4E; the interaction promotes association of EIF4E with 4ESE-containing mRNAs. Interacts with exportin XPO1/CRM1; interacts both alone and in complex with EIF4E and 4ESE-containing mRNAs to form an EIF4E-dependent mRNA export complex. Interacts with importin IPO8; the interaction occurs when LRPPRC is in its RNA-free form and returns LRPPRC to the nucleus for further export rounds. Interacts with BECN1. In terms of tissue distribution, widely expressed. Expressed in liver, brain and a subset of small diameter sensory neurons in the dorsal root ganglion (at protein level).

It is found in the mitochondrion. Its subcellular location is the nucleus. The protein localises to the nucleoplasm. It localises to the nucleus inner membrane. The protein resides in the nucleus outer membrane. Functionally, may play a role in RNA metabolism in both nuclei and mitochondria. In the nucleus binds to HNRPA1-associated poly(A) mRNAs and is part of nmRNP complexes at late stages of mRNA maturation which are possibly associated with nuclear mRNA export. Positively modulates nuclear export of mRNAs containing the EIF4E sensitivity element (4ESE) by binding simultaneously to both EIF4E and the 4ESE and acting as a platform for assembly for the RNA export complex. Also binds to exportin XPO1/CRM1 to engage the nuclear pore and traffic the bound mRNAs to the cytoplasm. May bind mature mRNA in the nucleus outer membrane. In mitochondria binds to poly(A) mRNA. Plays a role in translation or stability of mitochondrially encoded cytochrome c oxidase (COX) subunits. May be involved in transcription regulation. Cooperates with PPARGC1A to regulate certain mitochondrially encoded genes and gluconeogenic genes and may regulate docking of PPARGC1A to transcription factors. Seems to be involved in the transcription regulation of the multidrug-related genes MDR1 and MVP. Part of a nuclear factor that binds to the invMED1 element of MDR1 and MVP gene promoters. Binds single-stranded DNA. Required for maintaining mitochondrial potential. Suppresses the initiation of basal levels of autophagy and mitophagy by sustaining BCL2 levels. The sequence is that of Leucine-rich PPR motif-containing protein, mitochondrial (Lrpprc) from Rattus norvegicus (Rat).